Consider the following 160-residue polypeptide: MADVCLRLQYACPWQSNMAAHGRQPVLSSTPLQILFHLNGWYFAAFFVAEILMFIYKGVILPYPQDNLILDVVLLLLFSGLETLRLFYGWKGNLCQRSLALFVSVAILVPCAVLSVYYLLLQTFVLRLEFVLNAVLLCFYGFELVLGVMTISIFSRANIY.

4 helical membrane passes run 41 to 61 (WYFA…GVIL), 68 to 88 (LILD…RLFY), 101 to 121 (LFVS…YLLL), and 134 to 154 (AVLL…ISIF).

In terms of assembly, part of the tectonic-like complex (also named B9 complex).

It localises to the membrane. The protein resides in the cytoplasm. It is found in the cytoskeleton. Its subcellular location is the cilium basal body. Part of the tectonic-like complex which is required for tissue-specific ciliogenesis and may regulate ciliary membrane composition. In Danio rerio (Zebrafish), this protein is Transmembrane protein 216 (tmem216).